The following is a 144-amino-acid chain: Transcription antitermination protein NusB (144 aa).

This sequence belongs to the NusB family.

In terms of biological role, involved in transcription antitermination. Required for transcription of ribosomal RNA (rRNA) genes. Binds specifically to the boxA antiterminator sequence of the ribosomal RNA (rrn) operons. This is Transcription antitermination protein NusB from Pelotomaculum thermopropionicum (strain DSM 13744 / JCM 10971 / SI).